The following is a 2005-amino-acid chain: Structural maintenance of chromosomes flexible hinge domain-containing protein 1 (2005 aa).

A compositionally biased stretch (gly residues) spans 1 to 13; that stretch reads MAAADGGGPGGAS. Residues 1 to 23 are disordered; it reads MAAADGGGPGGASVGTEEDGGGV. Position 2 is an N-acetylalanine (Ala2). The ATPase activity domain stretch occupies residues 111 to 702; it reads TKERIDFLPH…LSVTWPEGDE (592 aa). Lys1349 is subject to N6-acetyllysine. Glycyl lysine isopeptide (Lys-Gly) (interchain with G-Cter in SUMO2) cross-links involve residues Lys1374 and Lys1496. A Phosphothreonine modification is found at Thr1499. Residues 1720 to 1847 enclose the SMC hinge domain; it reads GDVLGKIAHL…DNLDAANHYR (128 aa). At Lys1802 the chain carries N6-succinyllysine. A Phosphoserine modification is found at Ser1974.

The protein belongs to the SMC family. Highly divergent. Homodimer; homodimerizes via its SMC hinge domain. Interacts with LRIF1. Sumoylated with SUMO1.

The protein resides in the chromosome. It carries out the reaction ATP + H2O = ADP + phosphate + H(+). Its function is as follows. Non-canonical member of the structural maintenance of chromosomes (SMC) protein family that plays a key role in epigenetic silencing by regulating chromatin architecture. Promotes heterochromatin formation in both autosomes and chromosome X, probably by mediating the merge of chromatin compartments. Plays a key role in chromosome X inactivation in females by promoting the spreading of heterochromatin. Recruited to inactivated chromosome X by Xist RNA and acts by mediating the merge of chromatin compartments: promotes random chromatin interactions that span the boundaries of existing structures, leading to create a compartment-less architecture typical of inactivated chromosome X. Required to facilitate Xist RNA spreading. Also required for silencing of a subset of clustered autosomal loci in somatic cells, such as the DUX4 locus. Has ATPase activity; may participate in structural manipulation of chromatin in an ATP-dependent manner as part of its role in gene expression regulation. Also plays a role in DNA repair: localizes to sites of DNA double-strand breaks in response to DNA damage to promote the repair of DNA double-strand breaks. Acts by promoting non-homologous end joining (NHEJ) and inhibiting homologous recombination (HR) repair. The protein is Structural maintenance of chromosomes flexible hinge domain-containing protein 1 of Homo sapiens (Human).